The following is an 82-amino-acid chain: Small ribosomal subunit protein uS17 (82 aa).

Belongs to the universal ribosomal protein uS17 family. As to quaternary structure, part of the 30S ribosomal subunit.

Functionally, one of the primary rRNA binding proteins, it binds specifically to the 5'-end of 16S ribosomal RNA. In Shewanella sp. (strain W3-18-1), this protein is Small ribosomal subunit protein uS17.